Reading from the N-terminus, the 98-residue chain is NADH-ubiquinone oxidoreductase chain 4L (98 aa).

A run of 3 helical transmembrane segments spans residues 1-21 (MSMV…GLLM), 29-49 (SLLC…VTIL), and 61-81 (IILL…LVMV).

This sequence belongs to the complex I subunit 4L family. Core subunit of respiratory chain NADH dehydrogenase (Complex I) which is composed of 45 different subunits.

It localises to the mitochondrion inner membrane. It catalyses the reaction a ubiquinone + NADH + 5 H(+)(in) = a ubiquinol + NAD(+) + 4 H(+)(out). Core subunit of the mitochondrial membrane respiratory chain NADH dehydrogenase (Complex I) which catalyzes electron transfer from NADH through the respiratory chain, using ubiquinone as an electron acceptor. Part of the enzyme membrane arm which is embedded in the lipid bilayer and involved in proton translocation. This Pusa hispida (Ringed seal) protein is NADH-ubiquinone oxidoreductase chain 4L (MT-ND4L).